A 684-amino-acid polypeptide reads, in one-letter code: Phenoloxidase 2 (684 aa).

Residues 1 to 50 (MADKKNLLLLFDHPTEPVFMDKGKRVTVFDVPDSFLTDRYRPISNEVQSR) constitute a propeptide that is removed on maturation. His-208, His-212, and His-238 together coordinate Cu cation. The active-site Proton acceptor is Glu-350. Cu cation-binding residues include His-365, His-369, and His-405. N-linked (GlcNAc...) asparagine glycosylation is found at Asn-448 and Asn-492. 2 cysteine pairs are disulfide-bonded: Cys-581–Cys-623 and Cys-583–Cys-630. Asn-665 and Asn-677 each carry an N-linked (GlcNAc...) asparagine glycan.

The protein belongs to the tyrosinase family. Cu(2+) is required as a cofactor. Upon activation, a trypsin type protease cleaves prophenol oxidase to yield the active enzyme.

It localises to the secreted. It catalyses the reaction 2 L-dopa + O2 = 2 L-dopaquinone + 2 H2O. It carries out the reaction L-tyrosine + O2 = L-dopaquinone + H2O. Its function is as follows. This is a copper-containing oxidase that functions in the formation of pigments such as melanins and other polyphenolic compounds. Catalyzes the rate-limiting conversions of tyrosine to DOPA, DOPA to DOPA-quinone and possibly 5,6 dihydroxyindole to indole-5'6 quinonee. The chain is Phenoloxidase 2 (PPO2) from Drosophila melanogaster (Fruit fly).